The primary structure comprises 48 residues: M-oxotoxin-Ot1b (48 aa).

Its subcellular location is the secreted. The protein localises to the target cell membrane. In terms of biological role, disrupts cell membranes, particularly those rich in phosphocholine, through formation of pores. Has antimicrobial activity, hemolytic activity and insecticidal activity. In Oxyopes takobius (Lynx spider), this protein is M-oxotoxin-Ot1b.